Reading from the N-terminus, the 322-residue chain is UDP-N-acetylenolpyruvoylglucosamine reductase (322 aa).

The FAD-binding PCMH-type domain occupies 36–202; sequence RAGGPAQVLF…TSVLFEGVPG (167 aa). Residue arginine 182 is part of the active site. Serine 231 acts as the Proton donor in catalysis. Residue glutamate 301 is part of the active site.

This sequence belongs to the MurB family. FAD is required as a cofactor.

Its subcellular location is the cytoplasm. It carries out the reaction UDP-N-acetyl-alpha-D-muramate + NADP(+) = UDP-N-acetyl-3-O-(1-carboxyvinyl)-alpha-D-glucosamine + NADPH + H(+). It participates in cell wall biogenesis; peptidoglycan biosynthesis. In terms of biological role, cell wall formation. The protein is UDP-N-acetylenolpyruvoylglucosamine reductase of Brucella suis biovar 1 (strain 1330).